Here is a 360-residue protein sequence, read N- to C-terminus: Bifunctional protein FolD 4, chloroplastic (360 aa).

The N-terminal 51 residues, 1-51, are a transit peptide targeting the chloroplast; sequence MASMMFTDCSSTTTSRLIHLNRSSGTFLLRQCVGQLRLQTTASGRGCCIRS. N-acetylserine is present on Ser-52.

Belongs to the tetrahydrofolate dehydrogenase/cyclohydrolase family. In terms of assembly, homodimer.

Its subcellular location is the plastid. The protein resides in the chloroplast. The enzyme catalyses (6R)-5,10-methylene-5,6,7,8-tetrahydrofolate + NADP(+) = (6R)-5,10-methenyltetrahydrofolate + NADPH. The catalysed reaction is (6R)-5,10-methenyltetrahydrofolate + H2O = (6R)-10-formyltetrahydrofolate + H(+). The protein operates within one-carbon metabolism; tetrahydrofolate interconversion. Functionally, catalyzes the oxidation of 5,10-methylenetetrahydrofolate to 5,10-methenyltetrahydrofolate and then the hydrolysis of 5,10-methenyltetrahydrofolate to 10-formyltetrahydrofolate. This Arabidopsis thaliana (Mouse-ear cress) protein is Bifunctional protein FolD 4, chloroplastic (FOLD4).